The following is a 240-amino-acid chain: Cysteine-rich venom protein (240 aa).

The N-terminal stretch at 1 to 19 (MIAFIVLPILAAVLQQSSG) is a signal peptide. The SCP domain occupies 39 to 166 (DLHNSLRRSV…EYSYFYVCQY (128 aa)). 8 disulfide bridges follow: Cys-75/Cys-153, Cys-92/Cys-167, Cys-148/Cys-164, Cys-186/Cys-193, Cys-189/Cys-198, Cys-202/Cys-235, Cys-211/Cys-229, and Cys-220/Cys-233. The ShKT domain maps to 202–235 (CRQENKFTNCDSLVRQSSCQDNYMKTNCPASCFC).

This sequence belongs to the CRISP family. Expressed by the venom gland.

The protein resides in the secreted. Functionally, blocks contraction of smooth muscle elicited by high potassium-induced depolarization, but does not block caffeine-stimulated contraction. May target voltage-gated calcium channels on smooth muscle. The protein is Cysteine-rich venom protein of Protobothrops jerdonii (Jerdon's pitviper).